The sequence spans 428 residues: Elongation factor 1-alpha (428 aa).

The 211-residue stretch at 5 to 215 (KPHVNIVFIG…ALDQIPEPPK (211 aa)) folds into the tr-type G domain. A G1 region spans residues 14–21 (GHVDHGKS). 14–21 (GHVDHGKS) contributes to the GTP binding site. S21 provides a ligand contact to Mg(2+). The segment at 68 to 72 (GITID) is G2. The interval 89-92 (DAPG) is G3. Residues 89-93 (DAPGH) and 144-147 (NKMD) each bind GTP. Positions 144 to 147 (NKMD) are G4. The G5 stretch occupies residues 181-183 (SAW).

It belongs to the TRAFAC class translation factor GTPase superfamily. Classic translation factor GTPase family. EF-Tu/EF-1A subfamily.

It localises to the cytoplasm. It catalyses the reaction GTP + H2O = GDP + phosphate + H(+). GTP hydrolase that promotes the GTP-dependent binding of aminoacyl-tRNA to the A-site of ribosomes during protein biosynthesis. The protein is Elongation factor 1-alpha of Thermococcus gammatolerans (strain DSM 15229 / JCM 11827 / EJ3).